The following is a 185-amino-acid chain: uncharacterized protein (185 aa).

The signal sequence occupies residues 1–18 (MLLKLILILCFLVTLSLS). The disordered stretch occupies residues 30–185 (TQGPTIASGG…VQDCGEITGW (156 aa)). The span at 86–101 (RAQEGGKKDTTKEQPK) shows a compositional bias: basic and acidic residues. The segment covering 103 to 116 (NNNNKNLGRHSSSG) has biased composition (low complexity). The segment covering 117–135 (SGSGSGSGCGVTGDTGTGS) has biased composition (gly residues).

Its subcellular location is the secreted. This is an uncharacterized protein from Dictyostelium discoideum (Social amoeba).